Here is a 926-residue protein sequence, read N- to C-terminus: OTU domain-containing protein 7A (926 aa).

A disordered region spans residues 75–99 (PHVFNEGRGPKQPEREPQPGHKVER). The segment covering 82 to 99 (RGPKQPEREPQPGHKVER) has biased composition (basic and acidic residues). S119 carries the phosphoserine modification. Residues 168-410 (ERDLIEQATM…AVDPGKDWEW (243 aa)) form a TRAF-binding region. A catalytic region spans residues 183-449 (AGRLNWWSTV…VTWIRIPSET (267 aa)). Residues 199–374 (LLPLATTGDG…QAHFSALVSM (176 aa)) enclose the OTU domain. Residue D207 is part of the active site. C210 serves as the catalytic Nucleophile. H367 serves as the catalytic Proton acceptor. 3 disordered regions span residues 452–514 (PLAQ…DSVA), 537–613 (GLVH…DAWK), and 668–768 (EQEQ…APAR). A compositionally biased stretch (low complexity) spans 481–491 (VCSNSNSNNGK). Positions 492-510 (NGKDKEKEKQRKEKDKTRA) are enriched in basic and acidic residues. The Nuclear localization signal motif lies at 494–509 (KDKEKEKQRKEKDKTR). Composition is skewed to low complexity over residues 576 to 592 (GASA…PSPT), 677 to 691 (ATAA…AATA), and 729 to 742 (PAAG…AGGT). At R880 the chain carries Omega-N-methylarginine. Residues 884-919 (GPVQRRCQRENCAFYGRAETEHYCSYCYREELRRRR) form an A20-type zinc finger. Positions 890, 895, 907, and 910 each coordinate Zn(2+).

The protein belongs to the peptidase C64 family.

It is found in the cytoplasm. The protein localises to the nucleus. It carries out the reaction Thiol-dependent hydrolysis of ester, thioester, amide, peptide and isopeptide bonds formed by the C-terminal Gly of ubiquitin (a 76-residue protein attached to proteins as an intracellular targeting signal).. Functionally, deubiquitinase, which cleaves 'Lys-11'-linked polyubiquitin chains. Might be required for PA28-20S proteasome assembly. The chain is OTU domain-containing protein 7A (OTUD7A) from Homo sapiens (Human).